The primary structure comprises 162 residues: MNNLIMLVTNAVTLSEAAGGLFDFNATLPLQALQFILLTVLLTFIFYKPIGKLLEERETFISNNLAEASAKLLKADELCEQYETQLKEAKTGAQDVIAKAESEAKGIVAQEITQARADAASLIAQTNKELEAQKKLALQQLETQIDELSQLIKEKLLGKVVL.

A helical membrane pass occupies residues 26 to 46 (ATLPLQALQFILLTVLLTFIF).

Belongs to the ATPase B chain family. As to quaternary structure, F-type ATPases have 2 components, F(1) - the catalytic core - and F(0) - the membrane proton channel. F(1) has five subunits: alpha(3), beta(3), gamma(1), delta(1), epsilon(1). F(0) has four main subunits: a(1), b(1), b'(1) and c(10-14). The alpha and beta chains form an alternating ring which encloses part of the gamma chain. F(1) is attached to F(0) by a central stalk formed by the gamma and epsilon chains, while a peripheral stalk is formed by the delta, b and b' chains.

It localises to the plastid. Its subcellular location is the chloroplast thylakoid membrane. F(1)F(0) ATP synthase produces ATP from ADP in the presence of a proton or sodium gradient. F-type ATPases consist of two structural domains, F(1) containing the extramembraneous catalytic core and F(0) containing the membrane proton channel, linked together by a central stalk and a peripheral stalk. During catalysis, ATP synthesis in the catalytic domain of F(1) is coupled via a rotary mechanism of the central stalk subunits to proton translocation. Its function is as follows. Component of the F(0) channel, it forms part of the peripheral stalk, linking F(1) to F(0). The b'-subunit is a diverged and duplicated form of b found in plants and photosynthetic bacteria. In Emiliania huxleyi (Coccolithophore), this protein is ATP synthase subunit b', chloroplastic.